The sequence spans 696 residues: Glutamate-rich protein 6B (696 aa).

Over residues 1–10 the composition is skewed to polar residues; sequence MSAENNQLSG. Residues 1–105 form a disordered region; that stretch reads MSAENNQLSG…EYLEKAGYLE (105 aa). Acidic residues-rich tracts occupy residues 32–44 and 54–72; these read EDTE…ESLQ and ESLE…EEEE. The span at 73–91 shows a compositional bias: basic and acidic residues; it reads YLGKEEYLKEEEYLGKEEH.

It belongs to the ERICH6 family.

This Homo sapiens (Human) protein is Glutamate-rich protein 6B (ERICH6B).